A 180-amino-acid chain; its full sequence is NADH-quinone oxidoreductase subunit I (180 aa).

2 consecutive 4Fe-4S ferredoxin-type domains span residues 48-80 (IVLT…LQKA) and 90-119 (EFFR…LTPD). Residues cysteine 60, cysteine 63, cysteine 66, cysteine 70, cysteine 99, cysteine 102, cysteine 105, and cysteine 109 each coordinate [4Fe-4S] cluster. Basic and acidic residues predominate over residues 161–174 (KPKGDAEHEAKPID). The tract at residues 161–180 (KPKGDAEHEAKPIDVKSLLP) is disordered.

This sequence belongs to the complex I 23 kDa subunit family. NDH-1 is composed of 14 different subunits. Subunits NuoA, H, J, K, L, M, N constitute the membrane sector of the complex. Requires [4Fe-4S] cluster as cofactor.

Its subcellular location is the cell inner membrane. The catalysed reaction is a quinone + NADH + 5 H(+)(in) = a quinol + NAD(+) + 4 H(+)(out). NDH-1 shuttles electrons from NADH, via FMN and iron-sulfur (Fe-S) centers, to quinones in the respiratory chain. The immediate electron acceptor for the enzyme in this species is believed to be ubiquinone. Couples the redox reaction to proton translocation (for every two electrons transferred, four hydrogen ions are translocated across the cytoplasmic membrane), and thus conserves the redox energy in a proton gradient. This is NADH-quinone oxidoreductase subunit I from Aeromonas salmonicida (strain A449).